We begin with the raw amino-acid sequence, 326 residues long: Phospho-N-acetylmuramoyl-pentapeptide-transferase (326 aa).

A run of 10 helical transmembrane segments spans residues 13–33 (ILAPLIMGFLFSIVLGPIFIP), 57–77 (GTPTMGGLIFFIATATAILIM), 85–105 (EMILLYSFLAFGFIGFLDDIL), 121–141 (MILLVLFSVALAWYGYTNVGT), 155–175 (NLGILYIPFIVVYYAAVTNAV), 181–201 (IDGLATSVTVIVLTFFAIIGF), 208–228 (VAVFAIALAGALLGFLKFNAF), 232–252 (IFMGDTGSLALGGVIGTIALM), 257–277 (LFVIIVGGIYLIETLSVIIQV), and 305–325 (VKIVTIFSSITAILCIIGFVA).

Belongs to the glycosyltransferase 4 family. MraY subfamily. Requires Mg(2+) as cofactor.

The protein localises to the cell membrane. It carries out the reaction UDP-N-acetyl-alpha-D-muramoyl-L-alanyl-gamma-D-glutamyl-meso-2,6-diaminopimeloyl-D-alanyl-D-alanine + di-trans,octa-cis-undecaprenyl phosphate = di-trans,octa-cis-undecaprenyl diphospho-N-acetyl-alpha-D-muramoyl-L-alanyl-D-glutamyl-meso-2,6-diaminopimeloyl-D-alanyl-D-alanine + UMP. Its pathway is cell wall biogenesis; peptidoglycan biosynthesis. Its function is as follows. Catalyzes the initial step of the lipid cycle reactions in the biosynthesis of the cell wall peptidoglycan: transfers peptidoglycan precursor phospho-MurNAc-pentapeptide from UDP-MurNAc-pentapeptide onto the lipid carrier undecaprenyl phosphate, yielding undecaprenyl-pyrophosphoryl-MurNAc-pentapeptide, known as lipid I. The polypeptide is Phospho-N-acetylmuramoyl-pentapeptide-transferase (Clostridium beijerinckii (strain ATCC 51743 / NCIMB 8052) (Clostridium acetobutylicum)).